The chain runs to 403 residues: MKEHIAVDRNTYDQVMLPIYSPAQFIPVRGQGSRVWDQHGKEYIDFAGGIAVVALGHCHPTLVDVLKQQGEKLWHISNIFTNEPALILAQKLIDATFAERVFFANSGAEANEAAFKLARHYAIARHNPYKTKIIAFHQGFHGRTLFTVSVGGQPKYADGFGPKPADIIHVPFNDLDAVKAVIDDHTCAVVLEPVQGEGGVTAAAPAFIHGVRELCDKHQVLLVFDEVQSGMGRTGKLFSYMHYDVTPDIITTAKALGNGFPISAMLTTVNIASVMTPGAHGTTYGGNPLACAVANVAFDIINTPAVLAGVEKRHNLMVNFLNDINQKYSIFGEIRGKGLLIGAELKAPHQGKAKDILQLAAENGLMLLSAGGDVLRFTPSLIISEEEIAQGMERLEQVINQLV.

Pyridoxal 5'-phosphate is bound by residues 107-108 (GA) and Phe-140. A N(2)-acetyl-L-ornithine-binding site is contributed by Arg-143. 225 to 228 (DEVQ) is a binding site for pyridoxal 5'-phosphate. Lys-254 is modified (N6-(pyridoxal phosphate)lysine). Thr-282 provides a ligand contact to N(2)-acetyl-L-ornithine. Thr-283 contributes to the pyridoxal 5'-phosphate binding site.

It belongs to the class-III pyridoxal-phosphate-dependent aminotransferase family. ArgD subfamily. Homodimer. Requires pyridoxal 5'-phosphate as cofactor.

The protein resides in the cytoplasm. It carries out the reaction N(2)-acetyl-L-ornithine + 2-oxoglutarate = N-acetyl-L-glutamate 5-semialdehyde + L-glutamate. The enzyme catalyses N-succinyl-(2S,6S)-2,6-diaminopimelate + 2-oxoglutarate = (S)-2-succinylamino-6-oxoheptanedioate + L-glutamate. It functions in the pathway amino-acid biosynthesis; L-arginine biosynthesis; N(2)-acetyl-L-ornithine from L-glutamate: step 4/4. The protein operates within amino-acid biosynthesis; L-lysine biosynthesis via DAP pathway; LL-2,6-diaminopimelate from (S)-tetrahydrodipicolinate (succinylase route): step 2/3. In terms of biological role, involved in both the arginine and lysine biosynthetic pathways. In Photorhabdus laumondii subsp. laumondii (strain DSM 15139 / CIP 105565 / TT01) (Photorhabdus luminescens subsp. laumondii), this protein is Acetylornithine/succinyldiaminopimelate aminotransferase.